Consider the following 486-residue polypeptide: Membrane-bound lytic murein transglycosylase F (486 aa).

An N-terminal signal peptide occupies residues 1-29 (MFSPTALRPRYAKWLIATGLFLMLSGCVD). The non-LT domain stretch occupies residues 30-267 (KPNTLERVKE…RLKDRYYGHV (238 aa)). The interval 268–486 (DVLGYMGATT…SKPAQEPAPL (219 aa)) is LT domain. Residue Glu314 is part of the active site.

In the N-terminal section; belongs to the bacterial solute-binding protein 3 family. This sequence in the C-terminal section; belongs to the transglycosylase Slt family.

The protein localises to the cell outer membrane. It carries out the reaction Exolytic cleavage of the (1-&gt;4)-beta-glycosidic linkage between N-acetylmuramic acid (MurNAc) and N-acetylglucosamine (GlcNAc) residues in peptidoglycan, from either the reducing or the non-reducing ends of the peptidoglycan chains, with concomitant formation of a 1,6-anhydrobond in the MurNAc residue.. Murein-degrading enzyme that degrades murein glycan strands and insoluble, high-molecular weight murein sacculi, with the concomitant formation of a 1,6-anhydromuramoyl product. Lytic transglycosylases (LTs) play an integral role in the metabolism of the peptidoglycan (PG) sacculus. Their lytic action creates space within the PG sacculus to allow for its expansion as well as for the insertion of various structures such as secretion systems and flagella. The polypeptide is Membrane-bound lytic murein transglycosylase F (Pseudomonas fluorescens (strain Pf0-1)).